The following is a 685-amino-acid chain: Galactocerebrosidase (685 aa).

Positions 1 to 42 (MAEWLLSASWQRRAKAMTAAAGSAGRAAVPLLLCALLAPGGA) are cleaved as a signal peptide. T109 lines the substrate pocket. An N-linked (GlcNAc...) asparagine glycan is attached at N143. 2 residues coordinate substrate: W151 and N197. E198 (proton donor/acceptor) is an active-site residue. The active-site Nucleophile is the E274. C287 and C394 are disulfide-bonded. An N-linked (GlcNAc...) asparagine glycan is attached at N379. Position 396 (R396) interacts with substrate. N403, N556, N559, and N602 each carry an N-linked (GlcNAc...) asparagine glycan.

Belongs to the glycosyl hydrolase 59 family. Detected in urine. Detected in testis, brain and placenta (at protein level). Detected in kidney and liver.

Its subcellular location is the lysosome. It catalyses the reaction a beta-D-galactosyl-(1&lt;-&gt;1')-N-acylsphing-4-enine + H2O = an N-acylsphing-4-enine + D-galactose. It carries out the reaction beta-D-galactosyl-(1&lt;-&gt;1)-sphing-4-enine + H2O = sphing-4-enine + D-galactose. The enzyme catalyses a D-galactosylceramide + H2O = an N-acyl-sphingoid base + D-galactose. Its function is as follows. Hydrolyzes the galactose ester bonds of glycolipids such as galactosylceramide and galactosylsphingosine. Enzyme with very low activity responsible for the lysosomal catabolism of galactosylceramide, a major lipid in myelin, kidney and epithelial cells of small intestine and colon. The chain is Galactocerebrosidase from Homo sapiens (Human).